A 432-amino-acid chain; its full sequence is Beta-fructosidase (432 aa).

Residues 14–17 (WMND), Q33, W41, 74–75 (FS), Y92, 137–138 (RD), 188–190 (EIE), T208, and W260 contribute to the substrate site. Residue D17 is part of the active site.

The protein belongs to the glycosyl hydrolase 32 family.

The enzyme catalyses Hydrolysis of terminal non-reducing beta-D-fructofuranoside residues in beta-D-fructofuranosides.. Hydrolysis of sucrose, raffinose, inulin and levan. Specific for the fructose moiety and the beta-anomeric configuration of the glycosidic linkages of its substrates. The enzyme released fructose from sucrose and raffinose, and the fructose polymer inulin is hydrolyzed quantitatively in an exo-type fashion. The protein is Beta-fructosidase (bfrA) of Thermotoga maritima (strain ATCC 43589 / DSM 3109 / JCM 10099 / NBRC 100826 / MSB8).